Consider the following 127-residue polypeptide: Large ribosomal subunit protein bL17 (127 aa).

Belongs to the bacterial ribosomal protein bL17 family. Part of the 50S ribosomal subunit. Contacts protein L32.

The chain is Large ribosomal subunit protein bL17 from Actinobacillus pleuropneumoniae serotype 7 (strain AP76).